A 542-amino-acid chain; its full sequence is Chaperonin GroEL 1 (542 aa).

ATP contacts are provided by residues threonine 29–proline 32, aspartate 86–threonine 90, glycine 413, asparagine 477–alanine 479, and aspartate 493.

Belongs to the chaperonin (HSP60) family. As to quaternary structure, forms a cylinder of 14 subunits composed of two heptameric rings stacked back-to-back. Interacts with the co-chaperonin GroES.

It is found in the cytoplasm. It catalyses the reaction ATP + H2O + a folded polypeptide = ADP + phosphate + an unfolded polypeptide.. Together with its co-chaperonin GroES, plays an essential role in assisting protein folding. The GroEL-GroES system forms a nano-cage that allows encapsulation of the non-native substrate proteins and provides a physical environment optimized to promote and accelerate protein folding. In Renibacterium salmoninarum (strain ATCC 33209 / DSM 20767 / JCM 11484 / NBRC 15589 / NCIMB 2235), this protein is Chaperonin GroEL 1.